The chain runs to 279 residues: CDP-paratose synthase (279 aa).

The active-site Proton acceptor is the tyrosine 115.

Belongs to the NAD(P)-dependent epimerase/dehydratase family.

The catalysed reaction is CDP-alpha-D-paratose + NADP(+) = CDP-4-dehydro-3,6-dideoxy-alpha-D-glucose + NADPH + H(+). Its pathway is nucleotide-sugar biosynthesis; CDP-3,6-dideoxy-D-mannose biosynthesis; CDP-3,6-dideoxy-D-mannose from CTP and alpha-D-glucose 1-phosphate: step 4/5. Its function is as follows. Catalyzes synthesis of paratose and tyvelose, unusual 3,6-dideoxyhexose sugars that form part of the O-antigen in the lipopolysaccharides of several enteric bacteria. The polypeptide is CDP-paratose synthase (rfbS) (Salmonella typhi).